Reading from the N-terminus, the 436-residue chain is Adenylosuccinate synthetase (436 aa).

GTP-binding positions include 12–18 and 40–42; these read GDEGKGK and GHT. The active-site Proton acceptor is Asp-13. Mg(2+) is bound by residues Asp-13 and Gly-40. IMP-binding positions include 13 to 16, 38 to 41, Thr-128, Arg-142, Gln-223, Thr-238, and Arg-302; these read DEGK and NAGH. Residue His-41 is the Proton donor of the active site. Substrate is bound at residue 298–304; it reads TTTGRRR. GTP-binding positions include Arg-304, 330–332, and 412–414; these read KLD and SLG.

It belongs to the adenylosuccinate synthetase family. Homodimer. It depends on Mg(2+) as a cofactor.

It localises to the cytoplasm. The catalysed reaction is IMP + L-aspartate + GTP = N(6)-(1,2-dicarboxyethyl)-AMP + GDP + phosphate + 2 H(+). The protein operates within purine metabolism; AMP biosynthesis via de novo pathway; AMP from IMP: step 1/2. Plays an important role in the de novo pathway of purine nucleotide biosynthesis. Catalyzes the first committed step in the biosynthesis of AMP from IMP. The sequence is that of Adenylosuccinate synthetase from Prochlorococcus marinus subsp. pastoris (strain CCMP1986 / NIES-2087 / MED4).